The chain runs to 406 residues: Argininosuccinate synthase (406 aa).

Ala8 to Thr16 serves as a coordination point for ATP. Tyr86 and Ser91 together coordinate L-citrulline. Gly116 is a binding site for ATP. Thr118, Asn122, and Asp123 together coordinate L-aspartate. Asn122 provides a ligand contact to L-citrulline. 5 residues coordinate L-citrulline: Arg126, Ser175, Ser184, Glu261, and Tyr273.

The protein belongs to the argininosuccinate synthase family. Type 1 subfamily. Homotetramer.

The protein resides in the cytoplasm. The catalysed reaction is L-citrulline + L-aspartate + ATP = 2-(N(omega)-L-arginino)succinate + AMP + diphosphate + H(+). It participates in amino-acid biosynthesis; L-arginine biosynthesis; L-arginine from L-ornithine and carbamoyl phosphate: step 2/3. The protein is Argininosuccinate synthase of Brachyspira hyodysenteriae (strain ATCC 49526 / WA1).